The following is a 103-amino-acid chain: Urease subunit beta (103 aa).

It belongs to the urease beta subunit family. In terms of assembly, heterotrimer of UreA (gamma), UreB (beta) and UreC (alpha) subunits. Three heterotrimers associate to form the active enzyme.

Its subcellular location is the cytoplasm. The enzyme catalyses urea + 2 H2O + H(+) = hydrogencarbonate + 2 NH4(+). The protein operates within nitrogen metabolism; urea degradation; CO(2) and NH(3) from urea (urease route): step 1/1. This Streptomyces coelicolor (strain ATCC BAA-471 / A3(2) / M145) protein is Urease subunit beta.